The chain runs to 143 residues: Ribosomal RNA large subunit methyltransferase H (143 aa).

S-adenosyl-L-methionine-binding positions include Gly95 and 111-116 (FSDLTF).

It belongs to the RNA methyltransferase RlmH family. As to quaternary structure, homodimer.

The protein resides in the cytoplasm. The enzyme catalyses pseudouridine(1915) in 23S rRNA + S-adenosyl-L-methionine = N(3)-methylpseudouridine(1915) in 23S rRNA + S-adenosyl-L-homocysteine + H(+). In terms of biological role, specifically methylates the pseudouridine at position 1915 (m3Psi1915) in 23S rRNA. In Metamycoplasma arthritidis (strain 158L3-1) (Mycoplasma arthritidis), this protein is Ribosomal RNA large subunit methyltransferase H.